A 206-amino-acid polypeptide reads, in one-letter code: Protein GrpE (206 aa).

Residues 1–17 (MSNESIKAEQDLIHEGV) show a composition bias toward basic and acidic residues. The tract at residues 1-20 (MSNESIKAEQDLIHEGVESE) is disordered.

The protein belongs to the GrpE family. As to quaternary structure, homodimer.

It localises to the cytoplasm. In terms of biological role, participates actively in the response to hyperosmotic and heat shock by preventing the aggregation of stress-denatured proteins, in association with DnaK and GrpE. It is the nucleotide exchange factor for DnaK and may function as a thermosensor. Unfolded proteins bind initially to DnaJ; upon interaction with the DnaJ-bound protein, DnaK hydrolyzes its bound ATP, resulting in the formation of a stable complex. GrpE releases ADP from DnaK; ATP binding to DnaK triggers the release of the substrate protein, thus completing the reaction cycle. Several rounds of ATP-dependent interactions between DnaJ, DnaK and GrpE are required for fully efficient folding. The chain is Protein GrpE from Shewanella oneidensis (strain ATCC 700550 / JCM 31522 / CIP 106686 / LMG 19005 / NCIMB 14063 / MR-1).